The chain runs to 642 residues: Threonine--tRNA ligase (642 aa).

The region spanning 1–61 (MPIITLPDGS…SEDANLEIIT (61 aa)) is the TGS domain. Positions 243–534 (DHRKIGKALN…ITEEYAGFFP (292 aa)) are catalytic. The Zn(2+) site is built by C334, H385, and H511.

It belongs to the class-II aminoacyl-tRNA synthetase family. Homodimer. The cofactor is Zn(2+).

It is found in the cytoplasm. The catalysed reaction is tRNA(Thr) + L-threonine + ATP = L-threonyl-tRNA(Thr) + AMP + diphosphate + H(+). In terms of biological role, catalyzes the attachment of threonine to tRNA(Thr) in a two-step reaction: L-threonine is first activated by ATP to form Thr-AMP and then transferred to the acceptor end of tRNA(Thr). Also edits incorrectly charged L-seryl-tRNA(Thr). The polypeptide is Threonine--tRNA ligase (Histophilus somni (strain 2336) (Haemophilus somnus)).